We begin with the raw amino-acid sequence, 400 residues long: Enolase (400 aa).

Gln-154 lines the (2R)-2-phosphoglycerate pocket. The active-site Proton donor is Glu-197. Mg(2+) contacts are provided by Asp-233, Glu-274, and Asp-301. (2R)-2-phosphoglycerate-binding residues include Lys-326, Arg-355, Ser-356, and Lys-377. Lys-326 serves as the catalytic Proton acceptor.

Belongs to the enolase family. Requires Mg(2+) as cofactor.

The protein localises to the cytoplasm. Its subcellular location is the secreted. The protein resides in the cell surface. It carries out the reaction (2R)-2-phosphoglycerate = phosphoenolpyruvate + H2O. The protein operates within carbohydrate degradation; glycolysis; pyruvate from D-glyceraldehyde 3-phosphate: step 4/5. Functionally, catalyzes the reversible conversion of 2-phosphoglycerate (2-PG) into phosphoenolpyruvate (PEP). It is essential for the degradation of carbohydrates via glycolysis. This is Enolase from Picrophilus torridus (strain ATCC 700027 / DSM 9790 / JCM 10055 / NBRC 100828 / KAW 2/3).